A 320-amino-acid polypeptide reads, in one-letter code: Uroplakin-3b (320 aa).

An N-terminal signal peptide occupies residues 1 to 29; that stretch reads MGLPWGQPHLGLQMLLLALNCLRPSLSLG. Residues 30–240 are Lumenal-facing; that stretch reads EWGSWMDASS…LHPLFSGRPP (211 aa). N133 is a glycosylation site (N-linked (GlcNAc...) asparagine). Residues 241–266 traverse the membrane as a helical segment; it reads TLGLLGSLYHALLQPVVAGGGPGAAA. Residues 267 to 320 lie on the Cytoplasmic side of the membrane; the sequence is DRLLHGQALHDPPHPTQRGRHTAGGLQAWPGPPPQPQPLAWPLCMGLGEMGRWE. The disordered stretch occupies residues 273–303; sequence QALHDPPHPTQRGRHTAGGLQAWPGPPPQPQ.

The protein belongs to the uroplakin-3 family. In terms of assembly, heterodimer with uroplakin-1B (UPK1B).

The protein localises to the cell membrane. Functionally, component of the asymmetric unit membrane (AUM); a highly specialized biomembrane elaborated by terminally differentiated urothelial cells. May play an important role in AUM-cytoskeleton interaction in terminally differentiated urothelial cells. It also contributes to the formation of urothelial glycocalyx which may play an important role in preventing bacterial adherence. This is Uroplakin-3b (UPK3B) from Homo sapiens (Human).